Consider the following 315-residue polypeptide: 4-diphosphocytidyl-2-C-methyl-D-erythritol kinase (315 aa).

Lys-26 is a catalytic residue. 111-121 (PLAGGLAGGSA) is an ATP binding site. Residue Asp-153 is part of the active site.

Belongs to the GHMP kinase family. IspE subfamily.

It carries out the reaction 4-CDP-2-C-methyl-D-erythritol + ATP = 4-CDP-2-C-methyl-D-erythritol 2-phosphate + ADP + H(+). It participates in isoprenoid biosynthesis; isopentenyl diphosphate biosynthesis via DXP pathway; isopentenyl diphosphate from 1-deoxy-D-xylulose 5-phosphate: step 3/6. Catalyzes the phosphorylation of the position 2 hydroxy group of 4-diphosphocytidyl-2C-methyl-D-erythritol. The protein is 4-diphosphocytidyl-2-C-methyl-D-erythritol kinase of Salinispora arenicola (strain CNS-205).